A 148-amino-acid chain; its full sequence is Large ribosomal subunit protein uL13 (148 aa).

A disordered region spans residues 128–148 (PEHPHQAQNPQPFEINAKVEK).

This sequence belongs to the universal ribosomal protein uL13 family. In terms of assembly, part of the 50S ribosomal subunit.

This protein is one of the early assembly proteins of the 50S ribosomal subunit, although it is not seen to bind rRNA by itself. It is important during the early stages of 50S assembly. The chain is Large ribosomal subunit protein uL13 from Saccharopolyspora erythraea (strain ATCC 11635 / DSM 40517 / JCM 4748 / NBRC 13426 / NCIMB 8594 / NRRL 2338).